The chain runs to 178 residues: CASP-like protein 4D1 (178 aa).

Position 2 is an N-acetylalanine (alanine 2). Residues 2 to 14 (APPPPAPPSVTLR) are Cytoplasmic-facing. Residues 15–35 (TVLLLLRVLTAAFLLITVVLI) traverse the membrane as a helical segment. Topologically, residues 36–60 (STNTVTLEISSTSIKLPFNDVYAYR) are extracellular. A helical transmembrane segment spans residues 61–81 (YMLSAAVIGLVYAVVQLFLTI). At 82-97 (SQFATGKTHPLTYQFD) the chain is on the cytoplasmic side. A helical membrane pass occupies residues 98–118 (FYGDKVISYLLATGSAAGFGV). Residues 119-149 (SKDLKDTYIALIEFDSTDPVDKFFSKGYASA) are Extracellular-facing. A helical transmembrane segment spans residues 150–170 (SLLLFAFVSLAVLSVFSSLAL). Residues 171-178 (SKRPVPVS) lie on the Cytoplasmic side of the membrane.

Belongs to the Casparian strip membrane proteins (CASP) family. As to quaternary structure, homodimer and heterodimers. Expressed in the root epidermis.

The protein localises to the cell membrane. This chain is CASP-like protein 4D1, found in Arabidopsis thaliana (Mouse-ear cress).